Reading from the N-terminus, the 117-residue chain is MSQRAIGAGYELQARHYLERAGLTFCAANVALRGGELDLIMRDGQTWVFVEVRYRRSDAFGGAAASVTYRKQQRLLHAAAVWLAGRGASFDTSSCRFDVLAITGSQLEWIPNAFNAD.

Belongs to the UPF0102 family.

This is UPF0102 protein Spro_4337 from Serratia proteamaculans (strain 568).